The primary structure comprises 441 residues: Histidinol dehydrogenase (441 aa).

Substrate-binding residues include T240, Q262, and H265. Zn(2+)-binding residues include Q262 and H265. Residues E332 and H333 each act as proton acceptor in the active site. Positions 333, 366, 420, and 425 each coordinate substrate. Residue D366 participates in Zn(2+) binding. H425 contacts Zn(2+).

This sequence belongs to the histidinol dehydrogenase family. The cofactor is Zn(2+).

The enzyme catalyses L-histidinol + 2 NAD(+) + H2O = L-histidine + 2 NADH + 3 H(+). It functions in the pathway amino-acid biosynthesis; L-histidine biosynthesis; L-histidine from 5-phospho-alpha-D-ribose 1-diphosphate: step 9/9. Its function is as follows. Catalyzes the sequential NAD-dependent oxidations of L-histidinol to L-histidinaldehyde and then to L-histidine. This chain is Histidinol dehydrogenase, found in Streptomyces avermitilis (strain ATCC 31267 / DSM 46492 / JCM 5070 / NBRC 14893 / NCIMB 12804 / NRRL 8165 / MA-4680).